We begin with the raw amino-acid sequence, 192 residues long: Iron sulfur cluster assembly protein 1, mitochondrial (192 aa).

The transit peptide at 1 to 53 directs the protein to the mitochondrion; sequence MSVFRRSVQCVGVLPSILAQRSSLLARPANLQFLKTNSSKFVPQVTANVSRRM.

It belongs to the NifU family. Homodimer. Component of the core Fe-S cluster (ISC) assembly machinery. [2Fe-2S] cluster serves as cofactor.

It is found in the mitochondrion. It localises to the mitochondrion matrix. The protein operates within cofactor biosynthesis; iron-sulfur cluster biosynthesis. Its function is as follows. Scaffold protein for the de novo synthesis of iron-sulfur (Fe-S) clusters within mitochondria, which is required for maturation of both mitochondrial and cytoplasmic [2Fe-2S] and [4Fe-4S] proteins. First, a [2Fe-2S] cluster is transiently assembled on the scaffold protein isu1. In a second step, the cluster is released from isu1, transferred to a glutaredoxin, followed by the formation of mitochondrial [2Fe-2S] proteins, the synthesis of [4Fe-4S] clusters and their target-specific insertion into the recipient apoproteins. Cluster assembly on isu1 depends on the function of the cysteine desulfurase complex nfs1-isd11, which serves as the sulfur donor for cluster synthesis, the iron-binding protein frataxin as the putative iron donor, and the electron transfer chain comprised of ferredoxin reductase and ferredoxin, which receive their electrons from NADH. This chain is Iron sulfur cluster assembly protein 1, mitochondrial (isu1), found in Schizosaccharomyces pombe (strain 972 / ATCC 24843) (Fission yeast).